The primary structure comprises 115 residues: Large ribosomal subunit protein bL20 (115 aa).

Belongs to the bacterial ribosomal protein bL20 family.

Functionally, binds directly to 23S ribosomal RNA and is necessary for the in vitro assembly process of the 50S ribosomal subunit. It is not involved in the protein synthesizing functions of that subunit. In Microcystis aeruginosa (strain NIES-843 / IAM M-2473), this protein is Large ribosomal subunit protein bL20.